The chain runs to 1129 residues: Large proline-rich protein bag6 (1129 aa).

Residues 1 to 76 form the Ubiquitin-like domain; that stretch reads MEVTVKTLDS…HLVERAPPQT (76 aa). 8 disordered regions span residues 69-108, 187-235, 347-402, 490-518, 550-606, 654-692, 942-967, and 987-1009; these read VERA…PERN, QPVN…SPSE, TGNG…HPHP, PAAP…VPGA, GSNT…QHLS, VPVS…ESLP, VPQA…NGAA, and VPTI…QWAA. Positions 73–105 are enriched in low complexity; sequence PPQTQPSTGGPSTSSSTSPSSSNAANVPGAGAP. 2 stretches are compositionally biased toward polar residues: residues 209–232 and 364–383; these read RETL…SHPS and HTPT…QPPS. 2 stretches are compositionally biased toward low complexity: residues 553–593 and 655–666; these read TPSS…SSGP and PVSTSPPQSASQ. Pro residues predominate over residues 667 to 686; the sequence is APPPSSPSPPPAHSSPPPAA. Residues 947 to 956 show a composition bias toward polar residues; that stretch reads EASSQDQPME.

As to quaternary structure, component of the bag6/bat3 complex.

The protein localises to the cytoplasm. The protein resides in the cytosol. Its subcellular location is the nucleus. It localises to the secreted. It is found in the extracellular exosome. Its function is as follows. ATP-independent molecular chaperone preventing the aggregation of misfolded and hydrophobic patches-containing proteins. Functions as part of a cytosolic protein quality control complex, the bag6/bat3 complex, which maintains these client proteins in a soluble state and participates in their proper delivery to the endoplasmic reticulum or alternatively can promote their sorting to the proteasome where they undergo degradation. The bag6/bat3 complex is involved in the post-translational delivery of tail-anchored/type II transmembrane proteins to the endoplasmic reticulum membrane. Similarly, the bag6/bat3 complex also functions as a sorting platform for proteins of the secretory pathway that are mislocalized to the cytosol either delivering them to the proteasome for degradation or to the endoplasmic reticulum. The bag6/bat3 complex also plays a role in the endoplasmic reticulum-associated degradation (ERAD), a quality control mechanism that eliminates unwanted proteins of the endoplasmic reticulum through their retrotranslocation to the cytosol and their targeting to the proteasome. It maintains these retrotranslocated proteins in an unfolded yet soluble state condition in the cytosol to ensure their proper delivery to the proteasome. Also required for selective ubiquitin-mediated degradation of defective nascent chain polypeptides by the proteasome. Also involved in endoplasmic reticulum stress-induced pre-emptive quality control, a mechanism that selectively attenuates the translocation of newly synthesized proteins into the endoplasmic reticulum and reroutes them to the cytosol for proteasomal degradation. May ensure the proper degradation of these proteins and thereby protects the endoplasmic reticulum from protein overload upon stress. By stabilizing a large spectrum of proteins, may indirectly affect different biological processes including apoptosis. By controlling the steady-state expression of the IGF1R receptor, indirectly regulates the insulin-like growth factor receptor signaling pathway. Functionally, when nuclear, may also act as a component of some chromatin regulator complex. The protein is Large proline-rich protein bag6 of Xenopus tropicalis (Western clawed frog).